The following is a 488-amino-acid chain: UDP-N-acetylmuramate--L-alanine ligase (488 aa).

126 to 132 (GTHGKTT) is a binding site for ATP.

The protein belongs to the MurCDEF family.

Its subcellular location is the cytoplasm. It catalyses the reaction UDP-N-acetyl-alpha-D-muramate + L-alanine + ATP = UDP-N-acetyl-alpha-D-muramoyl-L-alanine + ADP + phosphate + H(+). Its pathway is cell wall biogenesis; peptidoglycan biosynthesis. Its function is as follows. Cell wall formation. The sequence is that of UDP-N-acetylmuramate--L-alanine ligase from Cronobacter sakazakii (strain ATCC BAA-894) (Enterobacter sakazakii).